The following is a 385-amino-acid chain: Ribosomal RNA large subunit methyltransferase G (385 aa).

The protein belongs to the methyltransferase superfamily. RlmG family.

Its subcellular location is the cytoplasm. The enzyme catalyses guanosine(1835) in 23S rRNA + S-adenosyl-L-methionine = N(2)-methylguanosine(1835) in 23S rRNA + S-adenosyl-L-homocysteine + H(+). Functionally, specifically methylates the guanine in position 1835 (m2G1835) of 23S rRNA. The protein is Ribosomal RNA large subunit methyltransferase G of Vibrio parahaemolyticus serotype O3:K6 (strain RIMD 2210633).